Consider the following 21-residue polypeptide: Major outer membrane protein (21 aa).

As to quaternary structure, disulfide bond interactions within and between MOMP molecules and other components form high molecular-weight oligomers.

The protein resides in the cell outer membrane. Functionally, structural rigidity of the outer membrane of elementary bodies and porin forming, permitting diffusion of solutes through the intracellular reticulate body membrane. The polypeptide is Major outer membrane protein (Actinobacillus suis).